Here is a 289-residue protein sequence, read N- to C-terminus: Protoheme IX farnesyltransferase (289 aa).

Transmembrane regions (helical) follow at residues 13–33, 40–60, 85–105, 111–131, 139–159, 168–188, 212–232, 234–254, and 269–289; these read LIKP…LYLA, VFLI…SFIF, ISIP…FYML, LLTA…YTIF, NIVI…AAIG, ILFT…AIFL, SIFF…FLEP, MGLL…ILSY, and FLFS…DHMI.

It belongs to the UbiA prenyltransferase family. Protoheme IX farnesyltransferase subfamily.

It is found in the cell inner membrane. It catalyses the reaction heme b + (2E,6E)-farnesyl diphosphate + H2O = Fe(II)-heme o + diphosphate. The protein operates within porphyrin-containing compound metabolism; heme O biosynthesis; heme O from protoheme: step 1/1. Its function is as follows. Converts heme B (protoheme IX) to heme O by substitution of the vinyl group on carbon 2 of heme B porphyrin ring with a hydroxyethyl farnesyl side group. This Leptospira borgpetersenii serovar Hardjo-bovis (strain JB197) protein is Protoheme IX farnesyltransferase.